Here is a 394-residue protein sequence, read N- to C-terminus: Elongation factor Tu (394 aa).

One can recognise a tr-type G domain in the interval 10–204 (KPHVNIGTIG…AVDSYIPQPV (195 aa)). Positions 19–26 (GHVDHGKT) are G1. 19–26 (GHVDHGKT) is a binding site for GTP. A Mg(2+)-binding site is contributed by threonine 26. A G2 region spans residues 60–64 (GITIS). Residues 81-84 (DCPG) are G3. GTP-binding positions include 81–85 (DCPGH) and 136–139 (NKID). The interval 136 to 139 (NKID) is G4. The segment at 174–176 (SAL) is G5.

It belongs to the TRAFAC class translation factor GTPase superfamily. Classic translation factor GTPase family. EF-Tu/EF-1A subfamily. Monomer.

The protein resides in the cytoplasm. The enzyme catalyses GTP + H2O = GDP + phosphate + H(+). Its function is as follows. GTP hydrolase that promotes the GTP-dependent binding of aminoacyl-tRNA to the A-site of ribosomes during protein biosynthesis. This Rickettsia conorii (strain ATCC VR-613 / Malish 7) protein is Elongation factor Tu.